The chain runs to 807 residues: Probable phosphoketolase (807 aa).

Belongs to the XFP family. Thiamine diphosphate serves as cofactor.

This chain is Probable phosphoketolase, found in Nitrosospira multiformis (strain ATCC 25196 / NCIMB 11849 / C 71).